We begin with the raw amino-acid sequence, 271 residues long: Phosphate import ATP-binding protein PstB (271 aa).

The ABC transporter domain maps to 25–266; that stretch reads FDTKNLNLWY…PSDKRTEDYI (242 aa). 57–64 contributes to the ATP binding site; that stretch reads GPSGCGKS.

Belongs to the ABC transporter superfamily. Phosphate importer (TC 3.A.1.7) family. In terms of assembly, the complex is composed of two ATP-binding proteins (PstB), two transmembrane proteins (PstC and PstA) and a solute-binding protein (PstS).

The protein localises to the cell membrane. It carries out the reaction phosphate(out) + ATP + H2O = ADP + 2 phosphate(in) + H(+). Its function is as follows. Part of the ABC transporter complex PstSACB involved in phosphate import. Responsible for energy coupling to the transport system. In Bacillus anthracis, this protein is Phosphate import ATP-binding protein PstB.